The primary structure comprises 366 residues: Histidinol-phosphate aminotransferase 2 (366 aa).

An N6-(pyridoxal phosphate)lysine modification is found at K226.

It belongs to the class-II pyridoxal-phosphate-dependent aminotransferase family. Histidinol-phosphate aminotransferase subfamily. Homodimer. It depends on pyridoxal 5'-phosphate as a cofactor.

It catalyses the reaction L-histidinol phosphate + 2-oxoglutarate = 3-(imidazol-4-yl)-2-oxopropyl phosphate + L-glutamate. Its pathway is amino-acid biosynthesis; L-histidine biosynthesis; L-histidine from 5-phospho-alpha-D-ribose 1-diphosphate: step 7/9. This chain is Histidinol-phosphate aminotransferase 2 (hisC2), found in Haemophilus influenzae (strain ATCC 51907 / DSM 11121 / KW20 / Rd).